The chain runs to 481 residues: Putative amino-acid transporter CPE0389 (481 aa).

A run of 13 helical transmembrane segments spans residues 7–27 (LGVI…GVYN), 36–56 (ASAG…WFIA), 87–107 (FLMA…YAVL), 127–147 (LSIA…LAGV), 156–176 (IGTI…LFSF), 208–228 (STML…VVSG), 241–261 (FLGF…PLGV), 289–309 (VIMN…WTVM), 338–358 (FSLL…HFAG), 364–384 (MLSI…LYLF), 401–421 (RKYA…LIYA), 422–442 (AGIN…PVFI), and 461–481 (YFAI…FKFM).

Belongs to the amino acid-polyamine-organocation (APC) superfamily. Basic amino acid/polyamine antiporter (APA) (TC 2.A.3.2) family.

It is found in the cell membrane. Its function is as follows. Could be an amino acid transporter. This Clostridium perfringens (strain 13 / Type A) protein is Putative amino-acid transporter CPE0389.